Reading from the N-terminus, the 663-residue chain is UvrABC system protein B (663 aa).

The segment covering 1–10 (MIDKRDDKPF) has biased composition (basic and acidic residues). Positions 1–23 (MIDKRDDKPFKLKSKYKPSGDQP) are disordered. In terms of domain architecture, Helicase ATP-binding spans 31 to 271 (DNIEGGEKAQ…EQSIAKIQAE (241 aa)). Residue 44-51 (GATGTGKT) coordinates ATP. Positions 97–120 (YYDYYQPEAYVPSSDTYIEKDSSV) match the Beta-hairpin motif. The 167-residue stretch at 435–601 (QMDDLLGEIN…TIKKDIRGLI (167 aa)) folds into the Helicase C-terminal domain. Residues 627–662 (KEAINALQKQMQEAAELLDFELAAQMRDLILELKLM) form the UVR domain.

This sequence belongs to the UvrB family. In terms of assembly, forms a heterotetramer with UvrA during the search for lesions. Interacts with UvrC in an incision complex.

The protein resides in the cytoplasm. Functionally, the UvrABC repair system catalyzes the recognition and processing of DNA lesions. A damage recognition complex composed of 2 UvrA and 2 UvrB subunits scans DNA for abnormalities. Upon binding of the UvrA(2)B(2) complex to a putative damaged site, the DNA wraps around one UvrB monomer. DNA wrap is dependent on ATP binding by UvrB and probably causes local melting of the DNA helix, facilitating insertion of UvrB beta-hairpin between the DNA strands. Then UvrB probes one DNA strand for the presence of a lesion. If a lesion is found the UvrA subunits dissociate and the UvrB-DNA preincision complex is formed. This complex is subsequently bound by UvrC and the second UvrB is released. If no lesion is found, the DNA wraps around the other UvrB subunit that will check the other stand for damage. The protein is UvrABC system protein B of Streptococcus pyogenes serotype M2 (strain MGAS10270).